Consider the following 822-residue polypeptide: AP-1 complex subunit gamma-1 (822 aa).

Over residues 593 to 604 (NGPSEIVQTNGE) the composition is skewed to polar residues. The interval 593–627 (NGPSEIVQTNGETEPAPLETKPPPSGPQPTSQAND) is disordered. The GAE domain maps to 702–817 (PGIPSITAYS…QDLAEVNNFP (116 aa)).

It belongs to the adaptor complexes large subunit family. As to quaternary structure, adaptor protein complex 1 (AP-1) is a heterotetramer composed of two large adaptins (gamma-type subunit AP1G1 and beta-type subunit AP1B1), a medium adaptin (mu-type subunit AP1M1 or AP1M2) and a small adaptin (sigma-type subunit AP1S1 or AP1S2 or AP1S3). Interacts (via GAE domain) with RABEP1. Interacts with EPS15. Interacts with SYNRG/gamma-synergin. Interacts (via GAE domain) with AP1AR (via coiled-coil domain). Interacts with CLN3 (via dileucine motif); this interaction facilitates lysosomal targeting. Interacts (via GAE domain) with AFTPH/aftiphilin; the interaction is required to recruit AFTPH/aftiphilin to the perinuclear region of the cell. As to expression, widely expressed.

It localises to the golgi apparatus. Its subcellular location is the cytoplasmic vesicle. The protein localises to the clathrin-coated vesicle membrane. The protein resides in the cytoplasm. It is found in the perinuclear region. It localises to the clathrin-coated vesicle. Its subcellular location is the membrane. The protein localises to the clathrin-coated pit. Subunit of clathrin-associated adaptor protein complex 1 that plays a role in protein sorting in the late-Golgi/trans-Golgi network (TGN) and/or endosomes. The AP complexes mediate both the recruitment of clathrin to membranes and the recognition of sorting signals within the cytosolic tails of transmembrane cargo molecules. In association with AFTPH/aftiphilin in the aftiphilin/p200/gamma-synergin complex, involved in the trafficking of transferrin from early to recycling endosomes, and the membrane trafficking of furin and the lysosomal enzyme cathepsin D between the trans-Golgi network (TGN) and endosomes. The polypeptide is AP-1 complex subunit gamma-1 (Ap1g1) (Mus musculus (Mouse)).